Consider the following 274-residue polypeptide: Large ribosomal subunit protein uL2cy (274 aa).

Disordered regions lie at residues 1–25 and 223–274; these read MAIH…VKSN and MNPV…RRSK. Residues 7–25 are compositionally biased toward polar residues; the sequence is KTSTPSTRNGTVDSQVKSN.

The protein belongs to the universal ribosomal protein uL2 family. Part of the 50S ribosomal subunit.

It localises to the plastid. It is found in the chloroplast. The sequence is that of Large ribosomal subunit protein uL2cy (rpl2-B) from Atropa belladonna (Belladonna).